A 49-amino-acid polypeptide reads, in one-letter code: uncharacterized protein (49 aa).

Residues 17–39 (LLVFDTSLYIPPFMLSFIGYSLS) form a helical membrane-spanning segment.

The protein localises to the membrane. This is an uncharacterized protein from Saccharomyces cerevisiae (strain ATCC 204508 / S288c) (Baker's yeast).